The following is a 901-amino-acid chain: Protein translocase subunit SecA (901 aa).

ATP-binding positions include Q87, 105 to 109 (GEGKT), and D512. The tract at residues 859-901 (HQDDDSAAAAALAAQTGERKVGRNDPCPCGSGKKYKQCHGRLQ) is disordered. The Zn(2+) site is built by C885, C887, C896, and H897. The span at 891 to 901 (KKYKQCHGRLQ) shows a compositional bias: basic residues.

It belongs to the SecA family. In terms of assembly, monomer and homodimer. Part of the essential Sec protein translocation apparatus which comprises SecA, SecYEG and auxiliary proteins SecDF-YajC and YidC. Requires Zn(2+) as cofactor.

Its subcellular location is the cell inner membrane. It localises to the cytoplasm. The catalysed reaction is ATP + H2O + cellular proteinSide 1 = ADP + phosphate + cellular proteinSide 2.. Part of the Sec protein translocase complex. Interacts with the SecYEG preprotein conducting channel. Has a central role in coupling the hydrolysis of ATP to the transfer of proteins into and across the cell membrane, serving both as a receptor for the preprotein-SecB complex and as an ATP-driven molecular motor driving the stepwise translocation of polypeptide chains across the membrane. The protein is Protein translocase subunit SecA of Shigella dysenteriae serotype 1 (strain Sd197).